The sequence spans 649 residues: Archaeal Lon protease (649 aa).

At Met-1 to Thr-114 the chain is on the cytoplasmic side. ATP is bound at residue Gly-47 to Ser-54. The chain crosses the membrane as a helical span at residues Thr-115–Pro-135. The Extracellular segment spans residues Gln-136 to Tyr-138. A helical membrane pass occupies residues Leu-139–Leu-159. The Cytoplasmic portion of the chain corresponds to Thr-160–Asn-649. Residues Glu-456–Leu-639 form the Lon proteolytic domain. Residues Ser-550 and Lys-593 contribute to the active site.

The protein belongs to the peptidase S16 family. Archaeal LonB subfamily. Homohexamer. Organized in a ring with a central cavity.

It is found in the cell membrane. In terms of biological role, ATP-dependent serine protease that mediates the selective degradation of mutant and abnormal proteins as well as certain short-lived regulatory proteins. Degrades polypeptides processively. The sequence is that of Archaeal Lon protease from Methanocaldococcus jannaschii (strain ATCC 43067 / DSM 2661 / JAL-1 / JCM 10045 / NBRC 100440) (Methanococcus jannaschii).